The sequence spans 277 residues: Elongation factor Ts (277 aa).

Positions 79 to 82 are involved in Mg(2+) ion dislocation from EF-Tu; sequence TDFV.

Belongs to the EF-Ts family.

The protein resides in the cytoplasm. In terms of biological role, associates with the EF-Tu.GDP complex and induces the exchange of GDP to GTP. It remains bound to the aminoacyl-tRNA.EF-Tu.GTP complex up to the GTP hydrolysis stage on the ribosome. This is Elongation factor Ts from Phytoplasma australiense.